Consider the following 71-residue polypeptide: Antitoxin VapB26 (71 aa).

Antitoxin component of a type II toxin-antitoxin (TA) system. Upon expression in M.smegmatis neutralizes the effect of cognate toxin VapC26. The chain is Antitoxin VapB26 (vapB26) from Mycobacterium tuberculosis (strain ATCC 25618 / H37Rv).